The primary structure comprises 333 residues: ATP synthase subunit a (333 aa).

Positions 1–32 (MIYLHNKRKGMLKRLSALIVIGLLMNLPAVFA) are cleaved as a signal peptide. 7 helical membrane-spanning segments follow: residues 100 to 120 (HVVM…GVGN), 161 to 181 (FMPF…IGLV), 185 to 205 (ATAT…FLVT), 229 to 249 (LMWI…PFAL), 254 to 274 (FANM…IFVF), 279 to 299 (IAPV…LVAF), and 300 to 320 (LQAY…VAHE).

Belongs to the ATPase A chain family. As to quaternary structure, F-type ATPases have 2 components, CF(1) - the catalytic core - and CF(0) - the membrane proton channel. CF(1) has five subunits: alpha(3), beta(3), gamma(1), delta(1), epsilon(1). CF(0) has four main subunits: a, b, b' and c.

The protein resides in the cell inner membrane. Key component of the proton channel; it plays a direct role in the translocation of protons across the membrane. The sequence is that of ATP synthase subunit a from Chloroherpeton thalassium (strain ATCC 35110 / GB-78).